Here is a 562-residue protein sequence, read N- to C-terminus: MVKIVTVKTQAYPDQKPGTSGLRKRVKVFQSSANYAENFIQSIISTVEPAQRQEATLVVGGDGRFYMKEAIQLIARIAAANGIGRLVIGQNGILSTPAVSCIIRKIKAIGGIILTASHNPGGPNGDFGIKFNISNGGPAPEAITDKIFQISKTIEEYAICPDLKVDLGVLGKQQFDLENKFEPFTVEIVDSVEAYATMLRNIFDFSALKELLSGPNRLKIRIDAMHGVVGPYVKKILCEELGAPANSAVNCVPLEDFGGHHPDPNLTYAADLVETMKSGEHDFGAAFDGDGDRNMILGKHGFFVNPSDSVAVIAANIFSIPYFQQTGVRGFARSMPTSGALDRVANATKIALYETPTGWKFFGNLMDASKLSLCGEESFGTGSDHIREKDGLWAVLAWLSILATRKQSVEDILKDHWQKYGRNFFTRYDYEEVEAEGANKMMKDLEALMFDRSFVGKQFSANDKVYTVEKADNFEYSDPVDGSISRNQGLRLIFTDGSRIIFRLSGTGSAGATIRLYIDSYEKDVAKINQDPQVMLAPLISIALKVSQLQERTGRSAPTVIT.

M1 is subject to N-acetylmethionine. K16 is subject to N6-acetyllysine. R23 is a binding site for alpha-D-glucose 1,6-bisphosphate. T115 is modified (phosphothreonine). S117 lines the alpha-D-glucose 1,6-bisphosphate pocket. S117 functions as the Phosphoserine intermediate in the catalytic mechanism. Position 117 (S117) interacts with Mg(2+). S117 and S134 each carry phosphoserine. Residue T185 is modified to Phosphothreonine. 2 positions are modified to phosphoserine: S206 and S213. D288, D290, and D292 together coordinate Mg(2+). D292 and R293 together coordinate alpha-D-glucose 1,6-bisphosphate. The residue at position 349 (K349) is an N6-acetyllysine. Y353 carries the post-translational modification Phosphotyrosine. Alpha-D-glucose 1,6-bisphosphate is bound at residue T357. S369 carries the phosphoserine modification. Residues E376, S378, and K389 each contribute to the alpha-D-glucose 1,6-bisphosphate site. At S378 the chain carries Phosphoserine. N6-succinyllysine is present on K419. T467 bears the Phosphothreonine; by PAK1 mark. 3 positions are modified to phosphoserine: S477, S485, and S505. Position 507 is a phosphothreonine (T507). S509 and S541 each carry phosphoserine.

It belongs to the phosphohexose mutase family. As to quaternary structure, monomer. It depends on Mg(2+) as a cofactor. In terms of processing, phosphorylation at Thr-467 by PAK1 significantly enhances enzymatic activity.

It is found in the cytoplasm. It catalyses the reaction alpha-D-glucose 1-phosphate = alpha-D-glucose 6-phosphate. The enzyme catalyses O-phospho-L-seryl-[protein] + alpha-D-glucose 1-phosphate = alpha-D-glucose 1,6-bisphosphate + L-seryl-[protein]. It carries out the reaction alpha-D-glucose 1,6-bisphosphate + L-seryl-[protein] = O-phospho-L-seryl-[protein] + alpha-D-glucose 6-phosphate. Its function is as follows. Catalyzes the reversible isomerization of alpha-D-glucose 1-phosphate to alpha-D-glucose 6-phosphate. The mechanism proceeds via the intermediate compound alpha-D-glucose 1,6-bisphosphate. This enzyme participates in both the breakdown and synthesis of glucose. The polypeptide is Phosphoglucomutase-1 (PGM1) (Macaca fascicularis (Crab-eating macaque)).